The following is a 3106-amino-acid chain: MASSRSSSSSSEESPDSETSVSPVHLPPTPPPTSTAVLKSPSESKSSSTDPPQCTHSEDSLPSAAFYGPLDSKNPLLASCEKEIRELLGFMKKKKALATSMEQKYEFHRRCATTLFNIWTKYAPRLPSNYYNEKLLKVGDSLCQIKEYKLALLQCYGRYLQEFIADFDEHKEDVNHFKTVFFPKGFGDETARLTFHALSGKNICNYQLVCESDANLQNEESVRQCLHILSSFRLIMQVALPQEHLCWIIFNGTLYIYTICRKLMVIGQSSKALEFLLWASMCMESSVPLLSIRYLTWRATLYTAVCQCHYDCQDGIHGEAFARRALAKIDELRQLELMSSSSSLETSRKYYREATIKMAVMIFKRGVFESRRKNKNVLRPKLRLNLKEAQSLPWPRTVTERLLDELLDSTSSRFLAVLEALSDSNRRILQTGPLVTDEMELRDVVSELFMAGKELLILSNVRSNGKLDFPQTSLLEHVVEKRNALSVGASVRFAKLAFTYEEWGLFESLAGQLIHFLQKQDNPQSKKAEKDLILLLAVEPLINVKRNRGLIFPLETDKETQSIENYLKHIACHESCMRTTFTEDTFSLAAILHFCVCVPTQGVLPDKDIVVDIIGLLWQRCKLGIQRLNIPKNDFAKYSHKISTNKWVYLLWQISEVIHCYKLEDLDIVMVAEITLRLSEILESLGSPKRKFKKSADLSAKKGPDELPGTSKGVPEILPILKRAPVEQLFYAYELLDKAIIGMSWKCMLTTLSDGSSVIDHCYVKDSQDVDGDTYKPIASNSYTMDLHLELIQAQHRIAVVLLDQLEVLQAPTVSTNTPAKGWEKVKKPRSTECFTELTVMKKIKKNKLSKAIYLMQKALLLFEKDAVCETSRNLLMEANALIEKVEAEQNALYSYQKFLGSSKIKKSRIPPPPILLARTHCSVTLKPAPFISEVKASWYCILGCKADGSYGKVRLNNNHLPNSGEAIPADGRSFFEIKGLETNAQYCFAIAAYSSSGKLIGDAIGETTKPILIYPPLSAVTARMYLTQVAYQIGNYEMAKKVFSPVWDYFVASPLPDEQSVICLSNIMTITQKRLHSNILADTSSILLYLFLRNIFVMSDIKIKEENLFCDNIKGNEIFPAQQVARLVECENVLVALELSNFLNDANFALQAVTQCYGLLAPIIYHNIVLVPVIQILIKCIVVLQGIPSIIHSKKNISSFESIQHMIACCIFYMTKILRSWKEYDLAIMLINYGKKMLDITSGCRSLFGIEQEETAEEGVCSKKTSRTKKPQQVLLPEKINEQLALLETHLLKTTKQINSAELSGSEDPIFLYPIVLNWTVKGAMKEVMKFKQRPRFLEFFTQIMLKCMNDEKFHLMVEISAPVYDFLKRRNESLIGVKRIKYKETVISRRALKSPSKFKAIVIEIGKSSDLTRRRRKKKKTLKDFFYKNPSIFDMAELDRNKRTDVRKMAYRSLSDNLNPLILTYVRRKRFHQILLEELPWRAQMNLYLANAHFHLFLQKLTERTKERLGSSYSSVSFRSCDPNLFSLFHSGTVLPTAKLTVDSYNAMMDALTVSKKKKHNQTTDTEDLSVLFNSKSDDNIPKMKTQTIYESDSQLGIGVNVREKDRTLVWGLDHFMKIFLCCRRAMVLAYRGGYWTLLQNCCRVFWNFSRELQILLKQTVASCKTFPVSQDNFLCICVLPFYLGAELLIDMLIKLQSTNSIKPFEERGEFSIPSCYGNIKSDNGGSSLIFEHPLDDVNVVDLRWIHDFVLKSLEVLYQVEKWETLVSLAIQFNIISHERYTEQVTPLLVYAQRQLVQRIKELNGPELSRQACARYEAENGEKITCRNFIGKRLKIDSSTPKNLAELQGSSEPLKTLITSEQRLAKQLVSVPLDVNDTLRCFRETLEKSKYHNRSVRHSRKLLSLFLAQTQDVLQTSNQRSLKVQSLHSLGSLLLFADKKRAAFKCWSQALDDIFRKPDVLHNWKEFGTSLPGAPSSSSPPGFKDYSEEFLSKFGIWGCLQAAMITAKIAQFIKTANVKKRINCCILSALLFQSLLRTTLPHPKAERNYAQYEITQLLPGIELFSDKFRADICSVIASLYYVIRELHYAKYNLIVLPLLALYQYFVSVICQDIVRNLEARILKIEILIDLGFFSEAFYELFQIYHGKNMPCAIPAGYKATMKVKITQSFDSGKPLTHKDNMQALEELINRGLPHILVNLGYQHLLNKFNFAKSHFFISLAATINCIPDPSPKIMYYQFITERSKPTPQNLKDNENSHGQFLRLRDDYNLNTIKSILLMEAEEKVNSLLSETEHQCHRPLYLSSVLELEIMVEARLHLAAIALQRYRPAYSTAILYSTLKLLQDSKVFKKKVPEESCSPTSPETSTTESKDDSEFLDPISLNSREYFNIHLWLRCRLMLVTSFIAQIRGIGIMKESELTDCLSLIDEVCTEAKSADDTEVLAEFLMQAVVLGLQEKHFKADIIQKLKEIISLLEGSEFLSPRSWLTLAKSLILMDDLTKAEKFKKASSKENKLIFLNQAHRILIAQMLTFGETIEFPLSDSDYASPLQPLKNIYLPHVMLLAKVKLRIGHTMAKQVCSSSKKKDISKWLPVLHMFDMALKVCKATAAEEYEVEAEILFQKGRIERQMLMEEKTSIAHIESFFEAIQISLKNDQNSGLIRDSYLEIALVYFYLKKPKRKASATTLKPLPRRHSSVKDPVATQTEMYSSLAWIAIRAAAQVSESVLGINLLIGKKRAMIDKVNNITLPNIPEFATVDLLSSYTDYLLENYQVVFQTSNSLMCENDDVYDCIDGRKRNLSKVDVTWILLIRYYIHLQRINNMSKLLASATPVSGISLPDDTLLTSLYNSELILRQKEMHLFLKRFLQLYSSSCIDGFPRELLQGLENISLEKVLFESSGKVHRDSSLQSDLSGKLTVCPSYTEISSEMAVQALNKELCFQWYIPPLDKPLKDSEPMVLLLYAYNLKPLRILDIKVSTGNSLYVGTSWIPLRSVIAVHQKLSNLAQIAEISLPSVPEVTSEENIYETIEPEDKPIDTDLENMILECCSEIEALFSNNKDKDNEPPPPMTKVPFDVSLPAIFSLERLFDLANGCIVSVGSLFNWMVSIIQ.

3 stretches are compositionally biased toward low complexity: residues 1–24 (MASS…VSPV), 34–48 (STAV…KSSS), and 2356–2368 (ESCS…TSTT). Disordered regions lie at residues 1–58 (MASS…THSE) and 2354–2374 (PEES…KDDS).

This sequence belongs to the CFAP54 family. In terms of tissue distribution, expressed at high level in the testis and at a low level in the lung and brain.

It is found in the cytoplasm. Its subcellular location is the cytoskeleton. The protein localises to the cilium axoneme. In terms of biological role, required for assembly and function of cilia and flagella. In Mus musculus (Mouse), this protein is Cilia- and flagella-associated protein 54.